The following is a 336-amino-acid chain: Electron transfer flavoprotein subunit alpha (336 aa).

Residue L275 to D303 participates in FAD binding.

It belongs to the ETF alpha-subunit/FixB family. Heterodimer of an alpha and a beta subunit. Requires FAD as cofactor.

The electron transfer flavoprotein serves as a specific electron acceptor for other dehydrogenases. It transfers the electrons to the main respiratory chain via ETF-ubiquinone oxidoreductase (ETF dehydrogenase). The protein is Electron transfer flavoprotein subunit alpha (etfA) of Clostridium acetobutylicum (strain ATCC 824 / DSM 792 / JCM 1419 / IAM 19013 / LMG 5710 / NBRC 13948 / NRRL B-527 / VKM B-1787 / 2291 / W).